The sequence spans 218 residues: Thiopurine S-methyltransferase (218 aa).

Positions 10, 45, 66, and 123 each coordinate S-adenosyl-L-methionine.

Belongs to the class I-like SAM-binding methyltransferase superfamily. TPMT family.

Its subcellular location is the cytoplasm. It carries out the reaction S-adenosyl-L-methionine + a thiopurine = S-adenosyl-L-homocysteine + a thiopurine S-methylether.. The chain is Thiopurine S-methyltransferase from Shewanella sp. (strain MR-4).